The following is a 759-amino-acid chain: 5-methyltetrahydropteroyltriglutamate--homocysteine methyltransferase (759 aa).

Residues 17–20 and K116 each bind 5-methyltetrahydropteroyltri-L-glutamate; that span reads RELK. L-homocysteine is bound by residues 430-432 and E483; that span reads IGS. Residues 430 to 432 and E483 contribute to the L-methionine site; that span reads IGS. 5-methyltetrahydropteroyltri-L-glutamate contacts are provided by residues 514 to 515 and W560; that span reads RC. D598 serves as a coordination point for L-homocysteine. Residue D598 participates in L-methionine binding. A 5-methyltetrahydropteroyltri-L-glutamate-binding site is contributed by E604. Zn(2+) is bound by residues H641, C643, and E665. H694 serves as the catalytic Proton donor. Position 726 (C726) interacts with Zn(2+).

It belongs to the vitamin-B12 independent methionine synthase family. Requires Zn(2+) as cofactor.

The catalysed reaction is 5-methyltetrahydropteroyltri-L-glutamate + L-homocysteine = tetrahydropteroyltri-L-glutamate + L-methionine. It participates in amino-acid biosynthesis; L-methionine biosynthesis via de novo pathway; L-methionine from L-homocysteine (MetE route): step 1/1. Catalyzes the transfer of a methyl group from 5-methyltetrahydrofolate to homocysteine resulting in methionine formation. The polypeptide is 5-methyltetrahydropteroyltriglutamate--homocysteine methyltransferase (Lactococcus lactis subsp. lactis (strain IL1403) (Streptococcus lactis)).